The primary structure comprises 294 residues: Zinc finger protein 346 (294 aa).

At methionine 1 the chain carries N-acetylmethionine. Residues 1 to 19 (MECPAPDATDAADPGEAGP) show a composition bias toward low complexity. The tract at residues 1 to 35 (MECPAPDATDAADPGEAGPYKGSEEPEGREPDGVR) is disordered. A compositionally biased stretch (basic and acidic residues) spans 22-35 (GSEEPEGREPDGVR). Residues 70–104 (FTSTQCKVCCAMLISESQKLAHYQSKKHANKVKRY) form a Matrin-type 1 zinc finger. Zn(2+)-binding residues include cysteine 75, cysteine 78, histidine 91, and histidine 97. A Glycyl lysine isopeptide (Lys-Gly) (interchain with G-Cter in SUMO2) cross-link involves residue lysine 114. Residues 131 to 165 (DKNHCCPICNMTFSSPAVAQSHYLGKTHAKSLKLK) form a Matrin-type 2 zinc finger. Zn(2+)-binding residues include cysteine 136, cysteine 139, histidine 152, and histidine 158. Lysine 170 participates in a covalent cross-link: Glycyl lysine isopeptide (Lys-Gly) (interchain with G-Cter in SUMO2). 2 consecutive Matrin-type zinc fingers follow at residues 182–216 (DPDK…ETKL) and 236–270 (GKGY…SPKT). Residues 269–294 (KTLVTLGSQTPVQTQPTPKDSSTVQD) are disordered.

In terms of assembly, forms a heteromeric complex with XPO5 and ILF3. Found in a nuclear export complex with XPO5, RAN, ILF3, ZNF346 and double-stranded RNA. Interacts with XPO5. Interacts with ILF3 in an RNA-independent manner. Expressed in all tissues tested, including heart, brain, spleen, lung, liver, muscle, kidney and testis. Exogenous expression induced apoptosis.

Its subcellular location is the nucleus. It is found in the nucleolus. The protein localises to the cytoplasm. In terms of biological role, binds with low affinity to dsDNA and ssRNA, and with high affinity to dsRNA, with no detectable sequence specificity. May bind to specific miRNA hairpins. This Mus musculus (Mouse) protein is Zinc finger protein 346 (Znf346).